The following is a 370-amino-acid chain: Cytochrome b (370 aa).

4 helical membrane passes run 25–45 (FGSM…FLAV), 69–90 (WMMQ…YIHI), 105–125 (WLSG…GYVL), and 170–190 (FFAL…LHIL). The heme b site is built by His-75 and His-89. Heme b is bound by residues His-174 and His-188. His-193 is a binding site for a ubiquinone. A run of 4 helical transmembrane segments spans residues 218 to 238 (YKDM…VSFF), 280 to 300 (LGGA…PFTH), 312 to 332 (LMQL…WTAT), and 339 to 358 (FTTI…ISNP).

This sequence belongs to the cytochrome b family. As to quaternary structure, the cytochrome bc1 complex contains 3 respiratory subunits (MT-CYB, CYC1 and UQCRFS1), 2 core proteins (UQCRC1 and UQCRC2) and probably 6 low-molecular weight proteins. Requires heme b as cofactor.

Its subcellular location is the mitochondrion inner membrane. Its function is as follows. Component of the ubiquinol-cytochrome c reductase complex (complex III or cytochrome b-c1 complex) that is part of the mitochondrial respiratory chain. The b-c1 complex mediates electron transfer from ubiquinol to cytochrome c. Contributes to the generation of a proton gradient across the mitochondrial membrane that is then used for ATP synthesis. This Chilabothrus striatus (Haitian boa constrictor) protein is Cytochrome b (MT-CYB).